The following is a 555-amino-acid chain: Urocanate hydratase (555 aa).

NAD(+)-binding positions include 52 to 53 (GG), Q130, 176 to 178 (GMG), E196, R201, 242 to 243 (NA), 263 to 267 (QTSAH), 273 to 274 (YL), and Y322. Residue C410 is part of the active site. G492 lines the NAD(+) pocket.

This sequence belongs to the urocanase family. Requires NAD(+) as cofactor.

The protein resides in the cytoplasm. The catalysed reaction is 4-imidazolone-5-propanoate = trans-urocanate + H2O. Its pathway is amino-acid degradation; L-histidine degradation into L-glutamate; N-formimidoyl-L-glutamate from L-histidine: step 2/3. Functionally, catalyzes the conversion of urocanate to 4-imidazolone-5-propionate. The chain is Urocanate hydratase from Shewanella baltica (strain OS223).